Reading from the N-terminus, the 145-residue chain is MFLWLVIVLTISASVSSYEHKLNWVVPPANSSESFNDWASNKRFQVGDIIQFKYKKDSVMQVTKESYKQCNSSHPRFYSNTGKTRFMFDHSVPYYFISGTSGHCEKGQKMIVEVISRDHTTTSAAPPAAFAVLLCFFSLSLYFVA.

The N-terminal stretch at 1-17 (MFLWLVIVLTISASVSS) is a signal peptide. The region spanning 18–116 (YEHKLNWVVP…GQKMIVEVIS (99 aa)) is the Phytocyanin domain. N-linked (GlcNAc...) asparagine glycosylation is found at asparagine 30 and asparagine 71. A disulfide bridge connects residues cysteine 70 and cysteine 104. Serine 116 carries GPI-anchor amidated serine lipidation. The propeptide at 117 to 145 (RDHTTTSAAPPAAFAVLLCFFSLSLYFVA) is removed in mature form.

Belongs to the early nodulin-like (ENODL) family. In terms of tissue distribution, mostly expressed in leaves and flowers, and, to a lower extent, in roots and stems, but barely in seedlings and seeds.

The protein localises to the cell membrane. Its function is as follows. May act as a carbohydrate transporter. In Arabidopsis thaliana (Mouse-ear cress), this protein is Early nodulin-like protein 21.